A 266-amino-acid polypeptide reads, in one-letter code: Proliferating cell nuclear antigen (266 aa).

A DNA-binding region spans residues 61–80 (RCDRNLSMGMNLNNMAKMLK).

This sequence belongs to the PCNA family.

It is found in the nucleus. In terms of biological role, this protein is an auxiliary protein of DNA polymerase delta and is involved in the control of eukaryotic DNA replication by increasing the polymerase's processibility during elongation of the leading strand. The protein is Proliferating cell nuclear antigen (PCNA) of Pisum sativum (Garden pea).